A 159-amino-acid polypeptide reads, in one-letter code: Succinate dehydrogenase [ubiquinone] cytochrome b small subunit, mitochondrial (159 aa).

The N-terminal 56 residues, 1-56 (MAVLLKLGVLCSGQGARALSLRSRAVRPAFVSAFLQDQPTPGWRGTQHIHLSPSHQ), are a transit peptide targeting the mitochondrion. The Mitochondrial matrix portion of the chain corresponds to 57 to 63 (SGSKAAS). Residues 64 to 85 (LHWTSERVVSVLLLGLIPAGYL) traverse the membrane as a helical segment. At 86 to 90 (NPCSV) the chain is on the mitochondrial intermembrane side. A helical transmembrane segment spans residues 91 to 111 (VDYSLAAALTLHSHWGIGQVV). Residue His-102 participates in heme b binding. The Mitochondrial matrix portion of the chain corresponds to 112 to 120 (TDYVHGDAL). Residue Tyr-114 participates in a ubiquinone binding. A helical transmembrane segment spans residues 121-142 (QKATKAGLLAVSALTFAGLCYF). The Mitochondrial intermembrane segment spans residues 143–159 (NYHDVGICRAVAMLWKL).

This sequence belongs to the CybS family. As to quaternary structure, component of complex II composed of four subunits: the flavoprotein (FP) SDHA, iron-sulfur protein (IP) SDHB, and a cytochrome b560 composed of SDHC and SDHD.

It localises to the mitochondrion inner membrane. It functions in the pathway carbohydrate metabolism; tricarboxylic acid cycle. Its function is as follows. Membrane-anchoring subunit of succinate dehydrogenase (SDH) that is involved in complex II of the mitochondrial electron transport chain and is responsible for transferring electrons from succinate to ubiquinone (coenzyme Q). SDH also oxidizes malate to the non-canonical enol form of oxaloacetate, enol-oxaloacetate. Enol-oxaloacetate, which is a potent inhibitor of the succinate dehydrogenase activity, is further isomerized into keto-oxaloacetate. This Rattus norvegicus (Rat) protein is Succinate dehydrogenase [ubiquinone] cytochrome b small subunit, mitochondrial (Sdhd).